The sequence spans 254 residues: Leucyl/phenylalanyl-tRNA--protein transferase (254 aa).

It belongs to the L/F-transferase family.

Its subcellular location is the cytoplasm. It carries out the reaction N-terminal L-lysyl-[protein] + L-leucyl-tRNA(Leu) = N-terminal L-leucyl-L-lysyl-[protein] + tRNA(Leu) + H(+). It catalyses the reaction N-terminal L-arginyl-[protein] + L-leucyl-tRNA(Leu) = N-terminal L-leucyl-L-arginyl-[protein] + tRNA(Leu) + H(+). The catalysed reaction is L-phenylalanyl-tRNA(Phe) + an N-terminal L-alpha-aminoacyl-[protein] = an N-terminal L-phenylalanyl-L-alpha-aminoacyl-[protein] + tRNA(Phe). Its function is as follows. Functions in the N-end rule pathway of protein degradation where it conjugates Leu, Phe and, less efficiently, Met from aminoacyl-tRNAs to the N-termini of proteins containing an N-terminal arginine or lysine. The chain is Leucyl/phenylalanyl-tRNA--protein transferase from Burkholderia cenocepacia (strain ATCC BAA-245 / DSM 16553 / LMG 16656 / NCTC 13227 / J2315 / CF5610) (Burkholderia cepacia (strain J2315)).